A 162-amino-acid chain; its full sequence is UPF0305 protein MmarC5_0909 (162 aa).

This sequence belongs to the UPF0305 family.

This is UPF0305 protein MmarC5_0909 from Methanococcus maripaludis (strain C5 / ATCC BAA-1333).